Here is a 298-residue protein sequence, read N- to C-terminus: Myozenin-1 (298 aa).

The interval 1–34 (MPLSGTPAPNKKRKSSKLIMELTGGGQESSGLNL) is disordered. Phosphoserine is present on serine 82. Residues 105–173 (FSYSKGSSGG…TGTGDQAGGE (69 aa)) are disordered. The span at 118–129 (GSSSAGQYGSGQ) shows a compositional bias: low complexity. Residues 136–172 (SGSGSGGAGGPGSQTGRGGDAGTTGVGETGTGDQAGG) show a composition bias toward gly residues.

This sequence belongs to the myozenin family. In terms of assembly, interacts with ACTN2, ACTN3, FLNA, FLNB, FLNC, LDB3, PPP3CA and TCAP. Interacts via its C-terminal region with MYOT.

The protein localises to the nucleus. It localises to the cell projection. It is found in the pseudopodium. Functionally, myozenins may serve as intracellular binding proteins involved in linking Z-disk proteins such as alpha-actinin, gamma-filamin, TCAP/telethonin, LDB3/ZASP and localizing calcineurin signaling to the sarcomere. Plays an important role in the modulation of calcineurin signaling. May play a role in myofibrillogenesis. The protein is Myozenin-1 (MYOZ1) of Sus scrofa (Pig).